We begin with the raw amino-acid sequence, 94 residues long: Defensin alpha 5 (94 aa).

An N-terminal signal peptide occupies residues 1 to 19; sequence MRTIAILAAILLVALQAQA. Disulfide bonds link cysteine 65–cysteine 93, cysteine 67–cysteine 82, and cysteine 72–cysteine 92.

The protein belongs to the alpha-defensin family. As to quaternary structure, homodimer. Homotetramer. Interacts with B.antracis lef/lethal factor. Post-translationally, glycosylated. In terms of processing, proteolytically cleaved at Arg-62 by trypsin. Both the propeptide form proHD5/HD5(20-94) and HD5(56-94) are cleaved into the lumenal peptide form HD5(63-94) by trypsin. Unprocessed proHD5 exerts antimicrobial activities, but peptide potency is enhanced by peptide processing. Proteolytically cleaved in duodenal fluid; derived fragments are antimicrobially active against commensal bacteria (in vitro). (Microbial infection) The disulfide bridges and homodimerization are a prerequisite for the enhancement of S.flexneri adhesion and invasion. In terms of tissue distribution, expressed in the gastrointestinal, reproductive, and urinary tracts (at protein level). Expressed in Paneth cells of the small intestine (at protein level). Expressed throughout the urothelium of the lower urinary tract and in the collecting tubules of the kidney (at protein level). Expressed in stratified squamous epithelial cells of the female genital tract epithelia, such as in vagina, ectocervix, endocervix, endometrium, and fallopian tube (at protein level). Endometrial expression correlates with stages of the menstrual cycle: Expression is low during the early proliferative phase, increased during the mid- to late proliferative phase, peaks during the early secretory phase of the cycle, and decreases during the mid- to late secretory phase.

The protein resides in the secreted. It is found in the cytoplasmic vesicle. Its subcellular location is the secretory vesicle. In terms of biological role, host-defense peptide that maintains sterility in the urogenital system. Has antimicrobial activity against a wide range of bacteria, including Gram-negative E.coli, P.aeruginosa and S.typhimurium, and Gram-positive E.aerogenes, S.aureus, B.cereus, E.faecium and L.monocytogenes. Confers resistance to intestinal infection by S.typhimurium. Exhibits antimicrobial activity against enteric commensal bacteria such as B.adolescentis, L.acidophilus, B.breve, L.fermentum, B.longum and S.thermophilus. Binds to bacterial membranes and causes membrane disintegration. Induces the secretion of the chemokine IL-8 by intestinal epithelial cells. Binds to B.antracis lef/lethal factor, a major virulence factor from B.anthracis, and neutralizes its enzymatic activity. (Microbial infection) Acts as a target for S.flexneri infection by binding to the bacterium, possibly via bacterial surface proteins, and thereby augmenting infectivity via enhanced bacterial adhesion and invasion of epithelial cells and tissues. This chain is Defensin alpha 5 (DEFA5), found in Homo sapiens (Human).